The primary structure comprises 282 residues: uncharacterized protein (282 aa).

The stretch at 205–277 (LAQQRRVYAQ…DELQNKARDA (73 aa)) forms a coiled coil.

This is an uncharacterized protein from Treponema pallidum (strain Nichols).